Reading from the N-terminus, the 298-residue chain is MGQNGTVQPTQLVIITGMSGAGKTVAIQSFEDLGFFCVDNLPPTLLPKFLELVKESGNKMNKVALVMDLRSRDFFDHLFVALDELAEQEWIVPQILFLDAQDSTLVARYKETRRTHPLAPNEPPLEGIRLERQLLEEIKGRAQIIYDTTGLKPRELREKIVRQFSVHAQSGFTVNVMSFGFKYGIPIDADLVFDVRFLPNPYYIEHMRPKTGLDDEVSSYVLKWGETQKFLEKLLDLLAFMLPYYQREGKSQLVIAIGCTGGQHRSVALAEYIARHFSADYKTVVSHRDMERRKEAHR.

17-24 (GMSGAGKT) is an ATP binding site. Residue 68 to 71 (DLRS) participates in GTP binding.

This sequence belongs to the RapZ-like family.

Functionally, displays ATPase and GTPase activities. This is Nucleotide-binding protein GTNG_3015 from Geobacillus thermodenitrificans (strain NG80-2).